Reading from the N-terminus, the 418-residue chain is UDP-N-acetylglucosamine 1-carboxyvinyltransferase (418 aa).

Position 22–23 (lysine 22–asparagine 23) interacts with phosphoenolpyruvate. Residue arginine 92 coordinates UDP-N-acetyl-alpha-D-glucosamine. Residue cysteine 116 is the Proton donor of the active site. Residue cysteine 116 is modified to 2-(S-cysteinyl)pyruvic acid O-phosphothioketal. UDP-N-acetyl-alpha-D-glucosamine contacts are provided by aspartate 305 and valine 327.

This sequence belongs to the EPSP synthase family. MurA subfamily.

It localises to the cytoplasm. The enzyme catalyses phosphoenolpyruvate + UDP-N-acetyl-alpha-D-glucosamine = UDP-N-acetyl-3-O-(1-carboxyvinyl)-alpha-D-glucosamine + phosphate. Its pathway is cell wall biogenesis; peptidoglycan biosynthesis. Its function is as follows. Cell wall formation. Adds enolpyruvyl to UDP-N-acetylglucosamine. This is UDP-N-acetylglucosamine 1-carboxyvinyltransferase from Endomicrobium trichonymphae.